Reading from the N-terminus, the 154-residue chain is Xanthine-guanine phosphoribosyltransferase (154 aa).

5-phospho-alpha-D-ribose 1-diphosphate contacts are provided by residues Arg37 to Gly38 and Asp90 to Thr98. Position 91 (Asp91) interacts with Mg(2+). Residues Asp94 and Ile137 each contribute to the guanine site. Asp94 and Ile137 together coordinate xanthine. Residues Asp94 to Thr98 and Trp136 to Ile137 each bind GMP.

This sequence belongs to the purine/pyrimidine phosphoribosyltransferase family. XGPT subfamily. As to quaternary structure, homotetramer. Mg(2+) is required as a cofactor.

The protein localises to the cell inner membrane. It carries out the reaction GMP + diphosphate = guanine + 5-phospho-alpha-D-ribose 1-diphosphate. The catalysed reaction is XMP + diphosphate = xanthine + 5-phospho-alpha-D-ribose 1-diphosphate. It catalyses the reaction IMP + diphosphate = hypoxanthine + 5-phospho-alpha-D-ribose 1-diphosphate. It functions in the pathway purine metabolism; GMP biosynthesis via salvage pathway; GMP from guanine: step 1/1. Its pathway is purine metabolism; XMP biosynthesis via salvage pathway; XMP from xanthine: step 1/1. In terms of biological role, purine salvage pathway enzyme that catalyzes the transfer of the ribosyl-5-phosphate group from 5-phospho-alpha-D-ribose 1-diphosphate (PRPP) to the N9 position of the 6-oxopurines guanine and xanthine to form the corresponding ribonucleotides GMP (guanosine 5'-monophosphate) and XMP (xanthosine 5'-monophosphate), with the release of PPi. To a lesser extent, also acts on hypoxanthine. The chain is Xanthine-guanine phosphoribosyltransferase from Histophilus somni (strain 129Pt) (Haemophilus somnus).